The primary structure comprises 250 residues: Aliphatic sulfonates import ATP-binding protein SsuB 2 (250 aa).

An ABC transporter domain is found at 13–229 (VRLQGLTRSF…SYRDPLLGEY (217 aa)). Position 45–52 (45–52 (GHSGSGKS)) interacts with ATP.

Belongs to the ABC transporter superfamily. Aliphatic sulfonates importer (TC 3.A.1.17.2) family. The complex is composed of two ATP-binding proteins (SsuB), two transmembrane proteins (SsuC) and a solute-binding protein (SsuA).

It localises to the cell membrane. It carries out the reaction ATP + H2O + aliphatic sulfonate-[sulfonate-binding protein]Side 1 = ADP + phosphate + aliphatic sulfonateSide 2 + [sulfonate-binding protein]Side 1.. Its function is as follows. Part of the ABC transporter complex SsuABC involved in aliphatic sulfonates import. Responsible for energy coupling to the transport system. In Streptomyces avermitilis (strain ATCC 31267 / DSM 46492 / JCM 5070 / NBRC 14893 / NCIMB 12804 / NRRL 8165 / MA-4680), this protein is Aliphatic sulfonates import ATP-binding protein SsuB 2.